The primary structure comprises 482 residues: Falcipain-2b (482 aa).

Over 1–35 (MDYHMDYIPNEVISHQGERFVDKYVDRKILKNKKS) the chain is Cytoplasmic. Residues 1 to 241 (MDYHMDYIPN…PLKNSKYLLD (241 aa)) constitute a propeptide, activation peptide. A Bipartite vacuolar targeting signal 1 motif is present at residues 16–25 (QGERFVDKYV). A helical; Signal-anchor for type II membrane protein membrane pass occupies residues 36–56 (LLVIISLSVLSVVGFILFYFT). At 57–482 (PNFRKSDLFK…GTDAFIPLIE (426 aa)) the chain is on the lumenal side. Asn-67 carries an N-linked (GlcNAc...) asparagine glycan. Residues 84-105 (KSPNGKKFIVSKIDEALSFYDN) carry the Bipartite vacuolar targeting signal 2 motif. Residue Asn-117 is glycosylated (N-linked (GlcNAc...) asparagine). The short motif at 242-258 (QINYDAVIKKYKGNENF) is the Nose motif; required for the correct folding of the mature form element. Disulfide bonds link Cys-280-Cys-321, Cys-314-Cys-355, Cys-340-Cys-360, and Cys-409-Cys-470. The active site involves Cys-283. Residue His-415 is part of the active site. Positions 426–435 (EIVNPLTKKG) match the Arm motif; binds to host hemoglobin and required for the inhibitory interaction between the propeptide and the catalytic domain motif.

Belongs to the peptidase C1 family. In terms of assembly, component of the hemozoin formation complex (HFC) composed of falcipains FP2A and/or FP2B, plasmepsins PMII, PMIII/HAP and PMIV, heme detoxifying protein HDP and falcilysin FLN. The HFC complex is involved in hemoglobin degradation and detoxification of heme in the food vacuole during the asexual blood stage.

It localises to the vacuole. Its subcellular location is the membrane. Cysteine protease which cleaves native host hemoglobin in the food vacuole during the asexual blood stage. Preferentially cleaves substrates which have a leucine at the P2 position. The chain is Falcipain-2b from Plasmodium falciparum (isolate 3D7).